The primary structure comprises 769 residues: Probable protease Ga0334635_1659 (769 aa).

Positions 118 to 167 (VARGSSDNNGAPPLSFTLSHGDPKSDPEPSSPSRLVNTGLSEAERPESPL) are disordered.

Probably a dedicated protease for substrate gasdermin bGSDM; cleaves the bGSDM precursor, releasing the pore-forming moiety, which integrates into the membrane and triggers cell death. Involved in defense against bacteriophages. Expression of gasdermin bGSDM and this neighboring protease is toxic in E.coli. In Vitiosangium sp. (strain GDMCC 1.1324), this protein is Probable protease Ga0334635_1659.